A 432-amino-acid chain; its full sequence is Succinate--CoA ligase [GDP-forming] subunit beta, mitochondrial (432 aa).

The transit peptide at 1-37 directs the protein to the mitochondrion; it reads MASPVAAQAGKLLRALALRPRFLAAGSQAVQLTSRRW. One can recognise an ATP-grasp domain in the interval 46 to 274; the sequence is KKLMSDNGVR…NAEFRQKDIF (229 aa). Residue Gln57 participates in GTP binding. Lys73 carries the post-translational modification N6-acetyllysine. Lys78 is subject to N6-succinyllysine. 90-92 is a binding site for GTP; sequence GRG. N6-acetyllysine is present on residues Lys132 and Lys139. Leu146 lines the GTP pocket. A Phosphoserine modification is found at Ser161. Residues Lys200, Lys218, and Lys227 each carry the N6-acetyllysine modification. Mg(2+)-binding residues include Asn243 and Asp257. Residues Lys271 and Lys291 each carry the N6-acetyllysine modification. Residue Asn308 coordinates substrate. At Lys338 the chain carries N6-succinyllysine. N6-acetyllysine is present on Lys347. 365–367 contacts substrate; it reads GIV. N6-acetyllysine occurs at positions 386 and 423.

It belongs to the succinate/malate CoA ligase beta subunit family. GTP-specific subunit beta subfamily. In terms of assembly, heterodimer of an alpha and a beta subunit. The beta subunit determines specificity for GTP. Requires Mg(2+) as cofactor. As to expression, mainly expressed in liver, kidney, heart, spleen and skeletal muscle. Also found in intestine and colon, and in low amounts in lung, brain, prostate, testis and ovary.

The protein resides in the mitochondrion. The enzyme catalyses GTP + succinate + CoA = succinyl-CoA + GDP + phosphate. The protein operates within carbohydrate metabolism; tricarboxylic acid cycle; succinate from succinyl-CoA (ligase route): step 1/1. Functionally, GTP-specific succinyl-CoA synthetase functions in the citric acid cycle (TCA), coupling the hydrolysis of succinyl-CoA to the synthesis of GTP and thus represents the only step of substrate-level phosphorylation in the TCA. The beta subunit provides nucleotide specificity of the enzyme and binds the substrate succinate, while the binding sites for coenzyme A and phosphate are found in the alpha subunit. The chain is Succinate--CoA ligase [GDP-forming] subunit beta, mitochondrial from Homo sapiens (Human).